The following is a 298-amino-acid chain: Mitochondrial distribution and morphology protein 12 (298 aa).

Residues 1 to 298 enclose the SMP-LTD domain; the sequence is MSIELDWTGL…VYPHFYTLYL (298 aa). Residues 118 to 142 are disordered; that stretch reads SEHEESLSRWSDTESETGTCDSSSL. The span at 133-142 shows a compositional bias: polar residues; sequence ETGTCDSSSL.

This sequence belongs to the MDM12 family. As to quaternary structure, component of the ER-mitochondria encounter structure (ERMES) or MDM complex, composed of MMM1, MDM10, MDM12 and MDM34. An MMM1 homodimer associates with one molecule of MDM12 on each side in a pairwise head-to-tail manner, and the SMP-LTD domains of MMM1 and MDM12 generate a continuous hydrophobic tunnel for phospholipid trafficking.

It localises to the mitochondrion outer membrane. The protein localises to the endoplasmic reticulum membrane. In terms of biological role, component of the ERMES/MDM complex, which serves as a molecular tether to connect the endoplasmic reticulum (ER) and mitochondria. Components of this complex are involved in the control of mitochondrial shape and protein biogenesis, and function in nonvesicular lipid trafficking between the ER and mitochondria. MDM12 is required for the interaction of the ER-resident membrane protein MMM1 and the outer mitochondrial membrane-resident beta-barrel protein MDM10. The MDM12-MMM1 subcomplex functions in the major beta-barrel assembly pathway that is responsible for biogenesis of all mitochondrial outer membrane beta-barrel proteins, and acts in a late step after the SAM complex. The MDM10-MDM12-MMM1 subcomplex further acts in the TOM40-specific pathway after the action of the MDM12-MMM1 complex. Essential for establishing and maintaining the structure of mitochondria and maintenance of mtDNA nucleoids. The polypeptide is Mitochondrial distribution and morphology protein 12 (Malassezia globosa (strain ATCC MYA-4612 / CBS 7966) (Dandruff-associated fungus)).